The primary structure comprises 688 residues: Eukaryotic translation initiation factor 3 subunit B (688 aa).

Residues 1–32 (MAKKKGENYDSDGGDDQDYDEEPNFDDPEGFV) form a disordered region. Over residues 9–32 (YDSDGGDDQDYDEEPNFDDPEGFV) the composition is skewed to acidic residues. The 85-residue stretch at 57 to 141 (NVIVVDNIPV…HTLLVNLFSD (85 aa)) folds into the RRM domain. 6 WD repeats span residues 208 to 246 (RDRFTETYVKWSPLGTYIVTFHKQGVVIWGGSNFTKINK), 247 to 287 (FPHS…EKRS), 291 to 329 (DGTSNMSMFRWSHDDKYVARMGDNAIHVYETSTFYLLDK), 332 to 367 (IKVQGIRNFSWSPTDNIIAYWMSEDLEAPARVTLLE), 440 to 482 (EVKE…EPTM), and 527 to 572 (GDHF…KRVN). A coiled-coil region spans residues 613–642 (RIRMTRASKELLEKRAKLREQFVEYRTKRV).

This sequence belongs to the eIF-3 subunit B family. As to quaternary structure, component of the eukaryotic translation initiation factor 3 (eIF-3) complex.

The protein resides in the cytoplasm. Functionally, RNA-binding component of the eukaryotic translation initiation factor 3 (eIF-3) complex, which is involved in protein synthesis of a specialized repertoire of mRNAs and, together with other initiation factors, stimulates binding of mRNA and methionyl-tRNAi to the 40S ribosome. The eIF-3 complex specifically targets and initiates translation of a subset of mRNAs involved in cell proliferation. The protein is Eukaryotic translation initiation factor 3 subunit B of Aedes aegypti (Yellowfever mosquito).